The sequence spans 124 residues: Fluoride-specific ion channel FluC (124 aa).

Helical transmembrane passes span Leu-2–Ile-22, Thr-35–Phe-55, Thr-71–Phe-91, and Leu-100–Leu-120. Na(+) is bound by residues Gly-75 and Thr-78.

It belongs to the fluoride channel Fluc/FEX (TC 1.A.43) family.

The protein resides in the cell inner membrane. The catalysed reaction is fluoride(in) = fluoride(out). Na(+) is not transported, but it plays an essential structural role and its presence is essential for fluoride channel function. Functionally, fluoride-specific ion channel. Important for reducing fluoride concentration in the cell, thus reducing its toxicity. The chain is Fluoride-specific ion channel FluC from Proteus mirabilis (strain HI4320).